The sequence spans 197 residues: Large ribosomal subunit protein uL5 (197 aa).

The protein belongs to the universal ribosomal protein uL5 family. Part of the 50S ribosomal subunit; contacts the 5S rRNA and probably tRNA. Forms a bridge to the 30S subunit in the 70S ribosome.

Its function is as follows. This is one of the proteins that bind and probably mediate the attachment of the 5S RNA into the large ribosomal subunit, where it forms part of the central protuberance. In the 70S ribosome it contacts protein S13 of the 30S subunit (bridge B1b), connecting the 2 subunits; this bridge is implicated in subunit movement. May contact the P site tRNA; the 5S rRNA and some of its associated proteins might help stabilize positioning of ribosome-bound tRNAs. The protein is Large ribosomal subunit protein uL5 of Caldivirga maquilingensis (strain ATCC 700844 / DSM 13496 / JCM 10307 / IC-167).